Here is a 110-residue protein sequence, read N- to C-terminus: Snake venom vascular endothelial growth factor toxin ICPP (110 aa).

Glutamine 1 is modified (pyrrolidone carboxylic acid). Disulfide bonds link cysteine 14–cysteine 56, cysteine 45–cysteine 91, and cysteine 49–cysteine 93.

In terms of assembly, homodimer; disulfide-linked. Interacts with high affinity with KDR/VEGFR-2, and with a lower affinity with neuropilin-1 (NRP1) and neuropilin-2 (NRP2). As to expression, expressed by the venom gland.

It localises to the secreted. In terms of biological role, snake venom VEGFs may contribute to venom dispersion and prey subjugation by inducing vascular permeability and hypotension. This protein increases vascular permeability and angiogenesis probably through VEGF receptor (KDR/VEGFR-2) signaling. Induces DNA synthesis in human umbilical vein endothelial cells, and promotes mouse embryonic stem cell proliferation and differentiation. It may also induce a drastic hypotensive effect after intravenous injection. The hypotension is mediated by nitric oxide (NO), which is produced by VEGF-activated endothelium NO synthase. This Macrovipera lebetinus (Levantine viper) protein is Snake venom vascular endothelial growth factor toxin ICPP.